Consider the following 231-residue polypeptide: Large ribosomal subunit protein uL1 (231 aa).

It belongs to the universal ribosomal protein uL1 family. As to quaternary structure, part of the 50S ribosomal subunit.

In terms of biological role, binds directly to 23S rRNA. The L1 stalk is quite mobile in the ribosome, and is involved in E site tRNA release. Functionally, protein L1 is also a translational repressor protein, it controls the translation of the L11 operon by binding to its mRNA. The protein is Large ribosomal subunit protein uL1 of Thiobacillus denitrificans (strain ATCC 25259 / T1).